The primary structure comprises 926 residues: Nitrate reductase [NADH] (926 aa).

The disordered stretch occupies residues 1–85; that stretch reads MAASVDRQYH…SDSEEDDDEN (85 aa). The segment covering 36-46 has biased composition (polar residues); it reads YTFSNPPSSNG. The segment covering 58-73 has biased composition (low complexity); sequence DNNSNSNNGSNNNNNR. Mo-molybdopterin is bound at residue Cys-204. Residues 551–626 form the Cytochrome b5 heme-binding domain; sequence SKMYSMSEVK…LEDFRIGELI (76 aa). Heme is bound by residues His-586 and His-609. The 113-residue stretch at 670–782 folds into the FAD-binding FR-type domain; that stretch reads RVKIPCKLIE…KGPLGHIEYL (113 aa). FAD contacts are provided by residues 722–725, 739–743, Phe-744, Phe-751, 756–758, and Thr-809; these read RAYT, VVKVY, and VMS.

It belongs to the nitrate reductase family. In terms of assembly, homodimer. Requires FAD as cofactor. Heme is required as a cofactor. Mo-molybdopterin serves as cofactor.

It carries out the reaction nitrite + NAD(+) + H2O = nitrate + NADH + H(+). In terms of biological role, nitrate reductase is a key enzyme involved in the first step of nitrate assimilation in plants, fungi and bacteria. In Spinacia oleracea (Spinach), this protein is Nitrate reductase [NADH] (NIA).